The primary structure comprises 121 residues: Large ribosomal subunit protein bL20 (121 aa).

The protein belongs to the bacterial ribosomal protein bL20 family.

Binds directly to 23S ribosomal RNA and is necessary for the in vitro assembly process of the 50S ribosomal subunit. It is not involved in the protein synthesizing functions of that subunit. In Methylorubrum populi (strain ATCC BAA-705 / NCIMB 13946 / BJ001) (Methylobacterium populi), this protein is Large ribosomal subunit protein bL20.